Reading from the N-terminus, the 92-residue chain is uncharacterized protein (92 aa).

Homolog of shope fibroma virus T4A ORF. This is an uncharacterized protein from Swinepox virus (strain Kasza) (SWPV).